A 474-amino-acid polypeptide reads, in one-letter code: Transcription termination factor Rho (474 aa).

A disordered region spans residues 1–60 (MTEELDNTPSPAGDIPQETLPKPLPAPEETAGEQPAAAPEENRGNAVREEEEAAPVLEQI). Residues 107 to 182 (EVVVSGVMEQ…ASVISVEDIP (76 aa)) form the Rho RNA-BD domain. Residues 226 to 231 (GKGQRG), 238 to 243 (RGGKTV), and arginine 269 each bind ATP.

The protein belongs to the Rho family. Homohexamer. The homohexamer assembles into an open ring structure.

Functionally, facilitates transcription termination by a mechanism that involves Rho binding to the nascent RNA, activation of Rho's RNA-dependent ATPase activity, and release of the mRNA from the DNA template. The polypeptide is Transcription termination factor Rho (Akkermansia muciniphila (strain ATCC BAA-835 / DSM 22959 / JCM 33894 / BCRC 81048 / CCUG 64013 / CIP 107961 / Muc)).